The following is a 463-amino-acid chain: Annexin A7 (463 aa).

Composition is skewed to pro residues over residues 1 to 18 and 26 to 38; these read MSYP…PGYP and FPPP…PSGF. Disordered stretches follow at residues 1–54 and 71–153; these read MSYP…SSGY and GYPG…THGT. A repeat-rich region region spans residues 1–140; it reads MSYPGYPPTG…QYPGGQSPYP (140 aa). Residues 5–20 are 3 X 5 AA tandem repeats of G-Y-P-P-X; sequence GYPPTGYPPFPGYPPT. Over residues 86-99 the composition is skewed to gly residues; the sequence is GGQGFGAPPGGAGF. Annexin repeat units lie at residues 160 to 231, 232 to 303, 315 to 387, and 391 to 462; these read FDAM…ALFM, PSTY…SMCQ, QLAQ…TILQ, and NRPA…AIVG. An N6-acetyllysine modification is found at Lys208.

Belongs to the annexin family. Interacts with PDCD6.

Calcium/phospholipid-binding protein which promotes membrane fusion and is involved in exocytosis. The protein is Annexin A7 (ANXA7) of Bos taurus (Bovine).